A 440-amino-acid chain; its full sequence is Chromosome partition protein MukF (440 aa).

The tract at residues 208 to 236 (LSETSGTLRELQDTLEAAGDKLQANLLRI) is leucine-zipper.

Belongs to the MukF family. Interacts, and probably forms a ternary complex, with MukE and MukB via its C-terminal region. The complex formation is stimulated by calcium or magnesium. It is required for an interaction between MukE and MukB.

It is found in the cytoplasm. The protein localises to the nucleoid. Functionally, involved in chromosome condensation, segregation and cell cycle progression. May participate in facilitating chromosome segregation by condensation DNA from both sides of a centrally located replisome during cell division. Not required for mini-F plasmid partitioning. Probably acts via its interaction with MukB and MukE. Overexpression results in anucleate cells. It has a calcium binding activity. In Salmonella arizonae (strain ATCC BAA-731 / CDC346-86 / RSK2980), this protein is Chromosome partition protein MukF.